The sequence spans 44 residues: U9-ctenitoxin-Co1a (44 aa).

4 cysteine pairs are disulfide-bonded: cysteine 3–cysteine 17, cysteine 10–cysteine 23, cysteine 16–cysteine 33, and cysteine 25–cysteine 31.

Expressed by the venom gland.

The protein localises to the secreted. Its function is as follows. Insecticidal neurotoxin that reversibly inhibits the N-methyl-D-aspartate (NMDA)-subtype of ionotropic glutamate receptor (GRIN) and inhibits inactivation of insect sodium channels (Nav). In vivo, is highly toxic to insects. The sequence is that of U9-ctenitoxin-Co1a from Ctenus ornatus (Brazilian spider).